The following is a 262-amino-acid chain: NAC domain-containing protein 71 (262 aa).

Positions 6-160 (LPPGFRFHPT…AFALCRVVKK (155 aa)) constitute an NAC domain. The DNA-binding element occupies 107–166 (AGYRKTLVFYEGRAPLGDRTNWFMHEYRLCDIDDHSQKSPNFKGAFALCRVVKKNELKKN).

It is found in the nucleus. Its function is as follows. Transcription factor involved in tissue reunion of wounded inflorescence stems. Required for the division of pith cells in the reunion process, which is dependent on polar-transported auxin and the wound-inducible hormones ethylene and jasmonate. Binds to the promoters of XTH19 and XTH20 to induce their expression via auxin signaling. XTH19 and XTH20 are involved in cell proliferation in the tissue reunion process of incised stems. Involved in hypocotyl graft union formation. Required for the auxin- mediated promotion of vascular tissue proliferation during hypocotyl graft attachment. This Arabidopsis thaliana (Mouse-ear cress) protein is NAC domain-containing protein 71.